Consider the following 353-residue polypeptide: MAMTLLEDWCRGMDVNSQRALLVWGIPVNCDEAEIEETLQAAMPQVSYRMLGRMFWREENAKAALLELTGAVDYAAIPREMPGKGGVWKVLFKPPTSDAEFLERLHLFLAREGWTVQDVARVLGFQNPTPTPGPEMPAEMLNYILDNVIQPLVESIWYKRLTLFSGRDIPGPGEETFDPWLEHTNEVLEEWQVSDVEKRRRLMESLRGPAADVIRILKSNNPAITTAECLKALEQVFGSVESSRDAQIKFLNTYQNPGEKLSAYVIRLEPLLQKVVEKGAIDKDNVNQARLEQVIAGANHSGAIRRQLWLTGAGEGPAPNLFQLLVQIREEEAKEEEEEAEATLLQLGLEGHF.

It belongs to the PNMA family. In terms of tissue distribution, testis- and brain-specific. In some cancer patients, specifically expressed by paraneoplastic tumor cells.

Its subcellular location is the nucleus. It localises to the nucleolus. The polypeptide is Paraneoplastic antigen Ma1 (PNMA1) (Homo sapiens (Human)).